The primary structure comprises 259 residues: AA9 family lytic polysaccharide monooxygenase E (259 aa).

Residues 1-20 (MKATVLAGLAAVIAAQGVAG) form the signal peptide. Residues H21 and H99 each contribute to the Cu(2+) site. C69 and C193 are joined by a disulfide. H179 and Q188 together coordinate O2. Y190 serves as a coordination point for Cu(2+).

This sequence belongs to the polysaccharide monooxygenase AA9 family. The cofactor is Cu(2+).

The protein localises to the secreted. It carries out the reaction [(1-&gt;4)-beta-D-glucosyl]n+m + reduced acceptor + O2 = 4-dehydro-beta-D-glucosyl-[(1-&gt;4)-beta-D-glucosyl]n-1 + [(1-&gt;4)-beta-D-glucosyl]m + acceptor + H2O.. In terms of biological role, lytic polysaccharide monooxygenase (LPMO) that depolymerizes crystalline and amorphous polysaccharides via the oxidation of scissile alpha- or beta-(1-4)-glycosidic bonds, yielding C1 or C4 oxidation products. Catalysis by LPMOs requires the reduction of the active-site copper from Cu(II) to Cu(I) by a reducing agent and H(2)O(2) or O(2) as a cosubstrate. This Malbranchea cinnamomea (Thermophilic fungus) protein is AA9 family lytic polysaccharide monooxygenase E.